We begin with the raw amino-acid sequence, 95 residues long: N(2)-fixation sustaining protein CowN (95 aa).

It belongs to the CowN family.

Functionally, is required to sustain N(2)-dependent growth in the presence of low levels of carbon monoxide (CO). Probably acts by protecting the N(2) fixation ability of the nitrogenase complex, which is inactivated in the presence of CO. This is N(2)-fixation sustaining protein CowN from Allochromatium vinosum (strain ATCC 17899 / DSM 180 / NBRC 103801 / NCIMB 10441 / D) (Chromatium vinosum).